Reading from the N-terminus, the 500-residue chain is Intracellular exo-alpha-(1-&gt;5)-L-arabinofuranosidase (500 aa).

Residues Glu-28, Asn-73, and Asn-173 each contribute to the alpha-L-arabinofuranose site. Glu-174 (proton donor/acceptor) is an active-site residue. Alpha-L-arabinofuranose-binding residues include Tyr-245, Glu-293, and Gln-350. Glu-293 serves as the catalytic Nucleophile.

The protein belongs to the glycosyl hydrolase 51 family. In terms of assembly, homohexamer; trimer of dimers.

The protein resides in the cytoplasm. It carries out the reaction Hydrolysis of terminal non-reducing alpha-L-arabinofuranoside residues in alpha-L-arabinosides.. Its pathway is glycan metabolism; L-arabinan degradation. Its function is as follows. Involved in the degradation of arabinan and is a key enzyme in the complete degradation of the plant cell wall. Catalyzes the cleavage of terminal alpha-(1-&gt;5)-arabinofuranosyl bonds in different hemicellulosic homopolysaccharides (branched and debranched arabinans). The chain is Intracellular exo-alpha-(1-&gt;5)-L-arabinofuranosidase (abfA) from Halalkalibacterium halodurans (strain ATCC BAA-125 / DSM 18197 / FERM 7344 / JCM 9153 / C-125) (Bacillus halodurans).